Consider the following 382-residue polypeptide: Protein-arginine rhamnosyltransferase (382 aa).

DTDP is bound at residue 18-19 (FG). The active-site Proton acceptor is aspartate 20. DTDP-beta-L-rhamnose contacts are provided by residues aspartate 20, tyrosine 187, 250–252 (VPQ), and 268–272 (RGEDS). DTDP contacts are provided by residues tyrosine 187, 250–252 (VPQ), and 268–272 (RGEDS). Glutamate 270 is an active-site residue.

The protein belongs to the glycosyltransferase 104 family.

It carries out the reaction dTDP-beta-L-rhamnose + L-arginyl-[protein] = N(omega)-(alpha-L-rhamnosyl)-L-arginyl-[protein] + dTDP + H(+). Its function is as follows. Protein-arginine rhamnosyltransferase that catalyzes the transfer of a single rhamnose to elongation factor P (EF-P) on 'Lys-32', a modification required for EF-P-dependent rescue of polyproline stalled ribosomes. This chain is Protein-arginine rhamnosyltransferase, found in Neisseria meningitidis serogroup B / serotype 15 (strain H44/76).